The following is a 115-amino-acid chain: NADH-ubiquinone oxidoreductase chain 3 (115 aa).

The next 3 helical transmembrane spans lie at 3–23 (LMLALLTNFTLATLLVIIAFW), 55–75 (FFLVAITFLLFDLEIALLLPL), and 84–104 (LNTMLTMALFLIILLAVSLAY).

It belongs to the complex I subunit 3 family. In terms of assembly, core subunit of respiratory chain NADH dehydrogenase (Complex I) which is composed of 45 different subunits. Interacts with TMEM186. Interacts with TMEM242.

Its subcellular location is the mitochondrion inner membrane. It catalyses the reaction a ubiquinone + NADH + 5 H(+)(in) = a ubiquinol + NAD(+) + 4 H(+)(out). Functionally, core subunit of the mitochondrial membrane respiratory chain NADH dehydrogenase (Complex I) which catalyzes electron transfer from NADH through the respiratory chain, using ubiquinone as an electron acceptor. Essential for the catalytic activity of complex I. The protein is NADH-ubiquinone oxidoreductase chain 3 of Bos indicus (Zebu).